The primary structure comprises 259 residues: Global transcriptional regulator CodY (259 aa).

The interval 1–155 (MTLLEKTRKI…GGTVVGMEIL (155 aa)) is GAF domain. Positions 203-222 (ASKIADRVGITRSVIVNALR) form a DNA-binding region, H-T-H motif.

Belongs to the CodY family.

It localises to the cytoplasm. Its function is as follows. DNA-binding global transcriptional regulator which is involved in the adaptive response to starvation and acts by directly or indirectly controlling the expression of numerous genes in response to nutrient availability. During rapid exponential growth, CodY is highly active and represses genes whose products allow adaptation to nutrient depletion. The chain is Global transcriptional regulator CodY from Listeria monocytogenes serotype 4b (strain CLIP80459).